The following is a 416-amino-acid chain: UDP-N-acetylmuramoylalanine--D-glutamate ligase (416 aa).

104 to 110 (GSNGKST) contacts ATP.

This sequence belongs to the MurCDEF family.

It localises to the cytoplasm. It catalyses the reaction UDP-N-acetyl-alpha-D-muramoyl-L-alanine + D-glutamate + ATP = UDP-N-acetyl-alpha-D-muramoyl-L-alanyl-D-glutamate + ADP + phosphate + H(+). Its pathway is cell wall biogenesis; peptidoglycan biosynthesis. Functionally, cell wall formation. Catalyzes the addition of glutamate to the nucleotide precursor UDP-N-acetylmuramoyl-L-alanine (UMA). The protein is UDP-N-acetylmuramoylalanine--D-glutamate ligase of Francisella tularensis subsp. holarctica (strain FTNF002-00 / FTA).